The following is a 107-amino-acid chain: MISTTTHSVEGHEITDYVGIVNGEAIMGANVVRDFLAGISDVIGGRSAAYEDKLAEGRQIAVREMEDRAAQLGADAVVGVMLDFETLRDGMLMCVATGTAVKLRRRS.

The protein belongs to the UPF0145 family.

In Halalkalibacterium halodurans (strain ATCC BAA-125 / DSM 18197 / FERM 7344 / JCM 9153 / C-125) (Bacillus halodurans), this protein is UPF0145 protein BH1111.